The chain runs to 160 residues: ATP synthase subunit delta, mitochondrial (160 aa).

Residues 1 to 22 (MFRQSLRSIARTRTGTIGVRTY) constitute a mitochondrion transit peptide.

F-type ATP synthases have 2 components, the catalytic core F(1) and the membrane-embedded component F(0), linked together by a central stalk and a peripheral stalk. The central stalk, also called rotor shaft, is often seen as part of F(1). The peripheral stalk is seen as part of F(0). F(0) contains the membrane channel next to the rotor. F-type ATP synthases form dimers but each monomer functions independently in ATP generation. The dimer consists of 18 different polypeptides: ATP1 (subunit alpha, part of F(1), 3 molecules per monomer), ATP2 (subunit beta, part of F(1), 3 molecules per monomer), ATP3 (subunit gamma, part of the central stalk), ATP4 (subunit b, part of the peripheral stalk), ATP5/OSCP (subunit 5/OSCP, part of the peripheral stalk), ATP6 (subunit a, part of the peripheral stalk), ATP7 (subunit d, part of the peripheral stalk), ATP8 (subunit 8, part of the peripheral stalk), OLI1 (subunit c, part of the rotor, 10 molecules per monomer), ATP14 (subunit h, part of the peripheral stalk), ATP15 (subunit epsilon, part of the central stalk), ATP16 (subunit delta, part of the central stalk), ATP17 (subunit f, part of the peripheral stalk), ATP18 (subunit i/j, part of the peripheral stalk). Dimer-specific subunits are ATP19 (subunit k, at interface between monomers), ATP20 (subunit g, at interface between monomers), TIM11 (subunit e, at interface between monomers). Also contains subunit L.

It is found in the mitochondrion inner membrane. In terms of biological role, mitochondrial membrane ATP synthase (F(1)F(0) ATP synthase or Complex V) produces ATP from ADP in the presence of a proton gradient across the membrane which is generated by electron transport complexes of the respiratory chain. F-type ATP synthases consist of two structural domains, F(1) - containing the extramembraneous catalytic core, and F(0) - containing the membrane proton channel, linked together by a central stalk and a peripheral stalk. During catalysis, ATP synthesis in the catalytic domain of F(1) is coupled via a rotary mechanism of the central stalk subunits to proton translocation. Part of the complex F(1) domain and the central stalk which is part of the complex rotary element. Rotation of the central stalk against the surrounding alpha/ATP1(3)beta/ATP2(3) subunits leads to hydrolysis of ATP in three separate catalytic sites on the beta/ATP2 subunits. In Pichia angusta (Yeast), this protein is ATP synthase subunit delta, mitochondrial.